The sequence spans 623 residues: uncharacterized protein (623 aa).

Polar residues predominate over residues 1-18; that stretch reads MSSRSGSADTFTQRSDSN. Disordered stretches follow at residues 1–107, 132–181, 207–231, 298–349, 384–464, 533–553, and 568–623; these read MSSR…DPFT, LGSD…EIGA, SWNLNSRHKRRDSNDRTVQSRADTD, REET…ESDQ, RKSV…DRNV, SINDLQQGTSSSQNQAMPPET, and VESR…TKGD. Basic and acidic residues predominate over residues 25–34; it reads ISLDDVRDNN. Low complexity predominate over residues 39 to 49; that stretch reads SSSGISTTGSS. The segment covering 132 to 144 has biased composition (polar residues); it reads LGSDTARPTSNGG. The segment covering 165-177 has biased composition (low complexity); the sequence is STSTWGPSGPTTP. Residues 328–339 show a composition bias toward polar residues; that stretch reads EKSTFSRISEQP. The segment covering 400–417 has biased composition (low complexity); that stretch reads QTPTISTASSPIQPSSSP. Over residues 533-548 the composition is skewed to polar residues; it reads SINDLQQGTSSSQNQA. Residues 604–614 are compositionally biased toward low complexity; that stretch reads PSASPSTSRTR.

This is an uncharacterized protein from Emericella nidulans (strain FGSC A4 / ATCC 38163 / CBS 112.46 / NRRL 194 / M139) (Aspergillus nidulans).